Consider the following 195-residue polypeptide: Dephospho-CoA kinase (195 aa).

The region spanning 2 to 195 (IIGLTGGIGV…DIVDSLSLSS (194 aa)) is the DPCK domain. Residue 10-15 (GVGKSF) participates in ATP binding.

This sequence belongs to the CoaE family.

The protein resides in the cytoplasm. It carries out the reaction 3'-dephospho-CoA + ATP = ADP + CoA + H(+). It functions in the pathway cofactor biosynthesis; coenzyme A biosynthesis; CoA from (R)-pantothenate: step 5/5. Functionally, catalyzes the phosphorylation of the 3'-hydroxyl group of dephosphocoenzyme A to form coenzyme A. This is Dephospho-CoA kinase from Wolbachia sp. subsp. Brugia malayi (strain TRS).